The sequence spans 683 residues: THO complex subunit 5 (683 aa).

Residues 1–42 form a disordered region; that stretch reads MSSESSKKRKPKVIRSDGAPAEGKRNRSDTEQEGKYYSEEAE. Ser2 bears the N-acetylserine mark. Residues 2-144 form an interaction with CSF1R region; the sequence is SSESSKKRKP…YEVMHLQKEI (143 aa). Positions 2–199 are interaction with THOC7; that stretch reads SSESSKKRKP…RLDWELEQRK (198 aa). A phosphoserine mark is found at Ser5 and Ser6. The Nuclear localization signal signature appears at 7–10; it reads KKRK. The span at 22–42 shows a compositional bias: basic and acidic residues; sequence EGKRNRSDTEQEGKYYSEEAE. Positions 81–247 form a coiled coil; it reads AIEIEERRIQ…QASLPVQEYL (167 aa). Lys153 is covalently cross-linked (Glycyl lysine isopeptide (Lys-Gly) (interchain with G-Cter in SUMO2)). Tyr225 is subject to Phosphotyrosine; by SRC. The tandem RWD domains stretch occupies residues 247–683; that stretch reads LFMPFDQAHK…NHPQGFFSHR (437 aa). The disordered stretch occupies residues 301-336; that stretch reads FKPPEDSQDDESDSDAEEEQTTKRRRPTLGVQLDDK. Positions 306 to 319 are enriched in acidic residues; it reads DSQDDESDSDAEEE. Residues Ser307, Ser312, and Ser314 each carry the phosphoserine modification. Thr328 bears the Phosphothreonine mark.

The protein belongs to the THOC5 family. As to quaternary structure, component of the THO subcomplex, which is composed of THOC1, THOC2, THOC3, THOC5, THOC6 and THOC7. The THO subcomplex interacts with DDX39B to form the THO-DDX39B complex which multimerizes into a 28-subunit tetrameric assembly. Component of the transcription/export (TREX) complex at least composed of ALYREF/THOC4, DDX39B, SARNP/CIP29, CHTOP and the THO subcomplex; in the complex interacts with THOC1, THOC2, THOC5, THOC6 and THOC7; forms a coiled-coil dimer with THOC7; together with THOC6 and THOC7, plays a key structural role in oligomerization of the THO-DDX39B complex. TREX seems to have a dynamic structure involving ATP-dependent remodeling. Interacts with phosphorylated CSF1R. Interacts (via N-terminus) with the NTF2 domain of NXF1. Forms a complex with CEBPB. Interacts with CPSF6; indicative for an association with the cleavage factor Im (CFIm) complex. Interacts with LUZP4. Interacts with NCBP3. Phosphorylated on tyrosine upon binding to activated CSF1R; which causes a dissociation of the two proteins. Phosphorylation on Ser-5 and/or Ser-6 is required for nuclear export. Phosphorylated on Thr-328 in insulin-stimulated adipocytes. Phosphorylation at Tyr-225 modulates mRNA binding. As to expression, ubiquitously expressed.

The protein localises to the nucleus. It is found in the cytoplasm. Component of the THO subcomplex of the TREX complex which is thought to couple mRNA transcription, processing and nuclear export, and which specifically associates with spliced mRNA and not with unspliced pre-mRNA. Plays a key structural role in the oligomerization of the THO-DDX39B complex. TREX is recruited to spliced mRNAs by a transcription-independent mechanism, binds to mRNA upstream of the exon-junction complex (EJC) and is recruited in a splicing- and cap-dependent manner to a region near the 5' end of the mRNA where it functions in mRNA export to the cytoplasm via the TAP/NXF1 pathway. THOC5 in conjunction with ALYREF/THOC4 functions in NXF1-NXT1 mediated nuclear export of HSP70 mRNA; both proteins enhance the RNA binding activity of NXF1 and are required for NXF1 localization to the nuclear rim. Involved in transcription elongation and genome stability. Involved in alternative polyadenylation site choice by recruiting CPSF6 to 5' region of target genes; probably mediates association of the TREX and CFIm complexes. In terms of biological role, regulates the expression of myeloid transcription factors CEBPA, CEBPB and GAB2 by enhancing the levels of phosphatidylinositol 3,4,5-trisphosphate. May be involved in the differentiation of granulocytes and adipocytes. Essential for hematopoietic primitive cell survival and plays an integral role in monocytic development. Its function is as follows. (Microbial infection) The TREX complex is essential for the export of Kaposi's sarcoma-associated herpesvirus (KSHV) intronless mRNAs and infectious virus production. The protein is THO complex subunit 5 (THOC5) of Homo sapiens (Human).